Here is a 166-residue protein sequence, read N- to C-terminus: Short form salivary protein D7R1 (166 aa).

A signal peptide spans 1 to 21 (MFRKVFSVALVTCGLLVIVQA).

It belongs to the PBP/GOBP family. As to quaternary structure, interacts with host coagulation factor XII (F12) (inactive and activated) (via amino acids 1-77). Interacts with host high molecular weight kininogen (KNG1) (via amino acids 402-532). In terms of tissue distribution, female salivary gland (at protein level).

The protein resides in the secreted. With respect to regulation, zn(2+) modulates binding to host coagulation factor XII (F12) and high molecular weight kininogen (KNG1). Its function is as follows. Salivary protein with anticoagulant activity that targets the intrinsic blood coagulation pathway in the host. Inhibits activation of the host plasma contact system by preventing the reciprocal activation of host coagulation factor XII (F12) and prekallikrein (KLKB1). Attenuates generation of bradykinin in host plasma. May bind and sequester different mediators involved in the host response, such as serotonin and histamine. The polypeptide is Short form salivary protein D7R1 (Anopheles stephensi (Indo-Pakistan malaria mosquito)).